Consider the following 243-residue polypeptide: GrpE protein homolog, mitochondrial (243 aa).

The interval 42–75 (TEASKKEGKEDKAEAQGSQEPETAAETNKEAEGA) is disordered. The span at 44 to 55 (ASKKEGKEDKAE) shows a compositional bias: basic and acidic residues.

The protein belongs to the GrpE family. Component of the PAM complex, at least composed of mtHsp70, MGE1, TIM44, PAM16, PAM17 and PAM18.

Its subcellular location is the mitochondrion matrix. Its function is as follows. Essential component of the PAM complex, a complex required for the translocation of transit peptide-containing proteins from the inner membrane into the mitochondrial matrix in an ATP-dependent manner. Seems to control the nucleotide-dependent binding of SSC1 to substrate proteins. The chain is GrpE protein homolog, mitochondrial (mge1) from Debaryomyces hansenii (strain ATCC 36239 / CBS 767 / BCRC 21394 / JCM 1990 / NBRC 0083 / IGC 2968) (Yeast).